The following is a 318-amino-acid chain: Methionyl-tRNA formyltransferase (318 aa).

112–115 (SLLP) is a (6S)-5,6,7,8-tetrahydrofolate binding site.

Belongs to the Fmt family.

It catalyses the reaction L-methionyl-tRNA(fMet) + (6R)-10-formyltetrahydrofolate = N-formyl-L-methionyl-tRNA(fMet) + (6S)-5,6,7,8-tetrahydrofolate + H(+). Functionally, attaches a formyl group to the free amino group of methionyl-tRNA(fMet). The formyl group appears to play a dual role in the initiator identity of N-formylmethionyl-tRNA by promoting its recognition by IF2 and preventing the misappropriation of this tRNA by the elongation apparatus. The protein is Methionyl-tRNA formyltransferase of Citrifermentans bemidjiense (strain ATCC BAA-1014 / DSM 16622 / JCM 12645 / Bem) (Geobacter bemidjiensis).